A 289-amino-acid polypeptide reads, in one-letter code: Oxaloacetate decarboxylase (289 aa).

Residue Ser-50 participates in substrate binding. A Mg(2+)-binding site is contributed by Asp-88. Substrate contacts are provided by Arg-159 and His-235.

It belongs to the isocitrate lyase/PEP mutase superfamily. Oxaloacetate decarboxylase family. Homotetramer; dimer of dimers. Mg(2+) is required as a cofactor.

The catalysed reaction is oxaloacetate + H(+) = pyruvate + CO2. In terms of biological role, catalyzes the decarboxylation of oxaloacetate into pyruvate. Seems to play a role in maintaining cellular concentrations of bicarbonate and pyruvate. The protein is Oxaloacetate decarboxylase of Pseudomonas putida (strain ATCC 47054 / DSM 6125 / CFBP 8728 / NCIMB 11950 / KT2440).